Reading from the N-terminus, the 464-residue chain is NADH-quinone oxidoreductase subunit N (464 aa).

A run of 14 helical transmembrane segments spans residues phenylalanine 6–glycine 26, serine 36–phenylalanine 56, cysteine 75–alanine 95, tyrosine 101–histidine 121, phenylalanine 123–phenylalanine 143, phenylalanine 157–glycine 177, leucine 197–valine 217, proline 231–leucine 253, valine 257–glycine 279, phenylalanine 293–valine 313, proline 317–leucine 337, alanine 360–phenylalanine 380, phenylalanine 395–phenylalanine 415, and asparagine 439–leucine 459.

It belongs to the complex I subunit 2 family. NDH-1 is composed of 14 different subunits. Subunits NuoA, H, J, K, L, M, N constitute the membrane sector of the complex.

The protein localises to the cell inner membrane. It carries out the reaction a quinone + NADH + 5 H(+)(in) = a quinol + NAD(+) + 4 H(+)(out). NDH-1 shuttles electrons from NADH, via FMN and iron-sulfur (Fe-S) centers, to quinones in the respiratory chain. The immediate electron acceptor for the enzyme in this species is believed to be ubiquinone. Couples the redox reaction to proton translocation (for every two electrons transferred, four hydrogen ions are translocated across the cytoplasmic membrane), and thus conserves the redox energy in a proton gradient. The chain is NADH-quinone oxidoreductase subunit N from Anaplasma phagocytophilum (strain HZ).